The sequence spans 63 residues: Alpha-conotoxin-like PuSG1.2 (63 aa).

An N-terminal signal peptide occupies residues 1-21 (MRCLALLVVTLLLFTATATTG). Positions 22 to 43 (ASNGMNAAASGEAPDSISLAVR) are excised as a propeptide. Cystine bridges form between cysteine 46–cysteine 52 and cysteine 47–cysteine 60. The interval 48 to 50 (PDP) is lacks the Ser-Xaa-Pro motif that is crucial for potent interaction with nAChR.

This sequence belongs to the conotoxin A superfamily. Expressed by the salivary gland.

It localises to the secreted. In terms of biological role, alpha-conopeptides-like may act on postsynaptic membranes, they bind to the nicotinic acetylcholine receptors (nAChR) and thus inhibit them. Has possibly a distinct nAChR binding mode from other alpha-conotoxins, due to a different three residue motif (lacks the Ser-Xaa-Pro motif). The chain is Alpha-conotoxin-like PuSG1.2 from Conus pulicarius (Flea-bitten cone).